The following is a 40-amino-acid chain: Dolichyl-diphosphooligosaccharide--protein glycosyltransferase subunit 4 (40 aa).

Over 1–4 (MITD) the chain is Lumenal. The chain crosses the membrane as a helical span at residues 5 to 25 (VQLAIFSNVLGVFLFLLVVAY). The Cytoplasmic portion of the chain corresponds to 26–40 (HYINANTGKSSPKAK).

Belongs to the OST4 family. Component of the oligosaccharyltransferase (OST) complex.

It localises to the endoplasmic reticulum membrane. In terms of biological role, subunit of the oligosaccharyl transferase (OST) complex that catalyzes the initial transfer of a defined glycan (Glc(3)Man(9)GlcNAc(2) in eukaryotes) from the lipid carrier dolichol-pyrophosphate to an asparagine residue within an Asn-X-Ser/Thr consensus motif in nascent polypeptide chains, the first step in protein N-glycosylation. N-glycosylation occurs cotranslationally and the complex associates with the Sec61 complex at the channel-forming translocon complex that mediates protein translocation across the endoplasmic reticulum (ER). All subunits are required for a maximal enzyme activity. In Drosophila persimilis (Fruit fly), this protein is Dolichyl-diphosphooligosaccharide--protein glycosyltransferase subunit 4.